Consider the following 217-residue polypeptide: Probable GTP-binding protein EngB (217 aa).

In terms of domain architecture, EngB-type G spans 37-214 (SGLEVAFAGR…RAAMARLIGD (178 aa)). GTP contacts are provided by residues 45-52 (GRSNVGKS), 72-76 (GRTQE), 92-95 (DMPG), 159-162 (TKAD), and 193-195 (TSS). 2 residues coordinate Mg(2+): Ser52 and Thr74.

It belongs to the TRAFAC class TrmE-Era-EngA-EngB-Septin-like GTPase superfamily. EngB GTPase family. Mg(2+) is required as a cofactor.

Its function is as follows. Necessary for normal cell division and for the maintenance of normal septation. The sequence is that of Probable GTP-binding protein EngB from Nitrobacter winogradskyi (strain ATCC 25391 / DSM 10237 / CIP 104748 / NCIMB 11846 / Nb-255).